The sequence spans 551 residues: Nose resistant to fluoxetine protein 5 (551 aa).

The first 20 residues, 1–20 (MSRNFHIFFLLVSIIQVGNS), serve as a signal peptide directing secretion. The cysteines at positions 151 and 232 are disulfide-linked. The interval 241 to 265 (EDSEQEEGNVETTVAPTPDDDNSTL) is disordered.

It belongs to the BPI/LBP/Plunc superfamily. BPI/LBP family. Interacts with ttr-52. In terms of tissue distribution, expressed in the body wall muscle cells and detected at the basal surface of pharyngeal cells and basal-lateral membranes of the intestine.

It localises to the secreted. Plays a role in the uptake of a range of molecules including phosphatidylserine, lipids and xenobiotic compounds from the intestine to surrounding tissues. Possesses lipid transfer activity. Mediates transport of lipids from intestine to reproductive tract. Binds phosphatidylserine. Plays a role in efficient clearance of cell corpses by mediating phosphatidylserine appearance on phagocytic cells, thus promoting phagocytic engulfment of apoptotic cells. Vital for embryonic development. The polypeptide is Nose resistant to fluoxetine protein 5 (Caenorhabditis elegans).